The sequence spans 312 residues: Ribosomal protein L11 methyltransferase (312 aa).

Residues T162, G183, D205, and N248 each contribute to the S-adenosyl-L-methionine site.

It belongs to the methyltransferase superfamily. PrmA family.

The protein resides in the cytoplasm. It carries out the reaction L-lysyl-[protein] + 3 S-adenosyl-L-methionine = N(6),N(6),N(6)-trimethyl-L-lysyl-[protein] + 3 S-adenosyl-L-homocysteine + 3 H(+). Functionally, methylates ribosomal protein L11. The sequence is that of Ribosomal protein L11 methyltransferase from Bacillus cereus (strain ATCC 10987 / NRS 248).